Here is a 374-residue protein sequence, read N- to C-terminus: MSFNNTVAVAMSGGVDSSTVAAMLREEGYDLIGLTLQLWNQRRLAGKDGMPEPVQGRCCSIDDVYDARRVAETLGIPYYLVNEQERFESDVVRPFVSEYLHGRTPIPCSLCNNHLKFDQLLLRARQFGADRIATGHYARNEYDPARGRWILKRPADRSKDQTWFLFGLTQEQLSRTLFPLGGYTKPEVREIAATHKLALAAKPDSQEICFIPNGDYKRFIDAYLDEQGESIPDSAGELVSTTGEVLGRHAGIHNFTVGQRKGLGVTAPNPLYVLQIDPASHRVTVGSDTELATETFRARDCNWISIADLTGERRAQVKIRHRHEPAWATVRPVRGADGTAEAEITFDEPQRAVTPGQSAVFYDEDEVIGGGWIV.

Residues 10 to 17 (AMSGGVDS) and Leu36 contribute to the ATP site. The Nucleophile role is filled by Cys111. Cys111 and Cys209 are disulfide-bonded. Gly135 is an ATP binding site. The interaction with tRNA stretch occupies residues 159–161 (KDQ). The active-site Cysteine persulfide intermediate is Cys209.

This sequence belongs to the MnmA/TRMU family.

The protein localises to the cytoplasm. It carries out the reaction S-sulfanyl-L-cysteinyl-[protein] + uridine(34) in tRNA + AH2 + ATP = 2-thiouridine(34) in tRNA + L-cysteinyl-[protein] + A + AMP + diphosphate + H(+). Its function is as follows. Catalyzes the 2-thiolation of uridine at the wobble position (U34) of tRNA, leading to the formation of s(2)U34. This is tRNA-specific 2-thiouridylase MnmA from Acidobacterium capsulatum (strain ATCC 51196 / DSM 11244 / BCRC 80197 / JCM 7670 / NBRC 15755 / NCIMB 13165 / 161).